The sequence spans 495 residues: Calcium-dependent protein kinase 11 (495 aa).

A Protein kinase domain is found at Tyr26–Ile284. Residues Leu32 to Thr40 and Lys55 each bind ATP. Asp150 serves as the catalytic Proton acceptor. Ser190 bears the Phosphoserine mark. The autoinhibitory domain stretch occupies residues Ala290–Ile320. 4 EF-hand domains span residues Glu327–Glu362, Leu363–Met398, Glu399–Cys434, and Leu438–Val468. Ca(2+) contacts are provided by Asp340, Asp342, Ser344, Thr346, Glu351, Asp376, Asp378, Ser380, Thr382, Glu387, Asp412, Asp414, Ser416, Tyr418, Glu423, Asp446, Asp448, Asp450, Lys452, and Glu457.

Belongs to the protein kinase superfamily. Ser/Thr protein kinase family. CDPK subfamily. As to quaternary structure, interacts with Di19.

The protein localises to the cytoplasm. It localises to the nucleus. It carries out the reaction L-seryl-[protein] + ATP = O-phospho-L-seryl-[protein] + ADP + H(+). It catalyses the reaction L-threonyl-[protein] + ATP = O-phospho-L-threonyl-[protein] + ADP + H(+). With respect to regulation, activated by calcium. Autophosphorylation may play an important role in the regulation of the kinase activity. Its function is as follows. May play a role in signal transduction pathways that involve calcium as a second messenger. Functions as a regulator of the calcium-mediated abscisic acid (ABA) signaling pathway. Phosphorylates ABA-responsive transcription factors ABF1 and ABF4 in vitro. The protein is Calcium-dependent protein kinase 11 (CPK11) of Arabidopsis thaliana (Mouse-ear cress).